The following is a 430-amino-acid chain: Alpha-1,6-mannosyl-glycoprotein 2-beta-N-acetylglucosaminyltransferase (430 aa).

The Cytoplasmic segment spans residues 1-12 (MANLWKKQRLRD). A helical; Signal-anchor for type II membrane protein membrane pass occupies residues 13–35 (TGLCRLGILFAVTLSIVLMLVSV). Topologically, residues 36 to 430 (PRTALNGSSI…YRYSSSSASP (395 aa)) are lumenal. N-linked (GlcNAc...) asparagine glycans are attached at residues N41 and N61. Residues 104–108 (YVHNR) and D135 contribute to the substrate site. C177 and C188 are joined by a disulfide. Substrate is bound at residue 205-209 (SLKHH). A Mn(2+)-binding site is contributed by D237. C259 and C262 are joined by a disulfide. N295 carries an N-linked (GlcNAc...) asparagine glycan. A disulfide bond links C310 and C414. H345 contacts Mn(2+).

The protein belongs to the glycosyltransferase 16 (GT16) protein family. The cofactor is Mn(2+).

It is found in the golgi apparatus membrane. The catalysed reaction is an N(4)-{beta-D-GlcNAc-(1-&gt;2)-alpha-D-Man-(1-&gt;3)-[alpha-D-Man-(1-&gt;6)]-beta-D-Man-(1-&gt;4)-beta-D-GlcNAc-(1-&gt;4)-beta-D-GlcNAc}-L-asparaginyl-[protein] + UDP-N-acetyl-alpha-D-glucosamine = N(4)-{beta-D-GlcNAc-(1-&gt;2)-alpha-D-Man-(1-&gt;3)-[beta-D-GlcNAc-(1-&gt;2)-alpha-D-Man-(1-&gt;6)]-beta-D-Man-(1-&gt;4)-beta-D-GlcNAc-(1-&gt;4)-beta-D-GlcNAc}-L-asparaginyl-[protein] + UDP + H(+). Its pathway is protein modification; protein glycosylation. In terms of biological role, catalyzes an essential step in the conversion of oligo-mannose and hybrid to complex N-glycans. The protein is Alpha-1,6-mannosyl-glycoprotein 2-beta-N-acetylglucosaminyltransferase of Arabidopsis thaliana (Mouse-ear cress).